Reading from the N-terminus, the 130-residue chain is Small ribosomal subunit protein uS9 (130 aa).

Belongs to the universal ribosomal protein uS9 family.

This is Small ribosomal subunit protein uS9 from Xanthomonas campestris pv. campestris (strain 8004).